We begin with the raw amino-acid sequence, 122 residues long: Large ribosomal subunit protein uL14 (122 aa).

The protein belongs to the universal ribosomal protein uL14 family. In terms of assembly, part of the 50S ribosomal subunit. Forms a cluster with proteins L3 and L19. In the 70S ribosome, L14 and L19 interact and together make contacts with the 16S rRNA in bridges B5 and B8.

Its function is as follows. Binds to 23S rRNA. Forms part of two intersubunit bridges in the 70S ribosome. This Mycolicibacterium smegmatis (strain ATCC 700084 / mc(2)155) (Mycobacterium smegmatis) protein is Large ribosomal subunit protein uL14.